A 243-amino-acid chain; its full sequence is NAD-dependent protein deacylase SIR2rp3 (243 aa).

Residues 1–239 (MKACRCITIL…PTWVDQVLKE (239 aa)) enclose the Deacetylase sirtuin-type domain. NAD(+) is bound at residue 12–31 (GAGISAESGISTFRDSNGLW). 2 residues coordinate substrate: Y56 and R59. Residue 95–98 (QNVD) participates in NAD(+) binding. The active-site Proton acceptor is the H113. Residues C121 and C141 each coordinate Zn(2+). Residues 181–183 (GTS) and A225 contribute to the NAD(+) site.

It belongs to the sirtuin family. Class III subfamily. The cofactor is Zn(2+).

It is found in the mitochondrion. The enzyme catalyses N(6)-malonyl-L-lysyl-[protein] + NAD(+) + H2O = 2''-O-malonyl-ADP-D-ribose + nicotinamide + L-lysyl-[protein]. It catalyses the reaction N(6)-succinyl-L-lysyl-[protein] + NAD(+) + H2O = 2''-O-succinyl-ADP-D-ribose + nicotinamide + L-lysyl-[protein]. It carries out the reaction N(6)-glutaryl-L-lysyl-[protein] + NAD(+) + H2O = 2''-O-glutaryl-ADP-D-ribose + nicotinamide + L-lysyl-[protein]. In terms of biological role, NAD-dependent lysine demalonylase, desuccinylase and deglutarylase that specifically removes malonyl, succinyl and glutaryl groups on target proteins. Has weak NAD-dependent protein deacetylase activity; however this activity may not be physiologically relevant in vivo. This Leishmania major protein is NAD-dependent protein deacylase SIR2rp3 (SIR2rp3).